The chain runs to 602 residues: Elongation factor 4 (602 aa).

In terms of domain architecture, tr-type G spans 7 to 188; the sequence is ENIRNFSIIA…SIIRLVPPPK (182 aa). Residues 19–24 and 135–138 contribute to the GTP site; these read DHGKST and NKID.

It belongs to the TRAFAC class translation factor GTPase superfamily. Classic translation factor GTPase family. LepA subfamily.

It localises to the cell inner membrane. It catalyses the reaction GTP + H2O = GDP + phosphate + H(+). Required for accurate and efficient protein synthesis under certain stress conditions. May act as a fidelity factor of the translation reaction, by catalyzing a one-codon backward translocation of tRNAs on improperly translocated ribosomes. Back-translocation proceeds from a post-translocation (POST) complex to a pre-translocation (PRE) complex, thus giving elongation factor G a second chance to translocate the tRNAs correctly. Binds to ribosomes in a GTP-dependent manner. This chain is Elongation factor 4, found in Chlamydia trachomatis serovar D (strain ATCC VR-885 / DSM 19411 / UW-3/Cx).